The following is a 301-amino-acid chain: Probable 5-dehydro-4-deoxyglucarate dehydratase (301 aa).

This sequence belongs to the DapA family.

It carries out the reaction 5-dehydro-4-deoxy-D-glucarate + H(+) = 2,5-dioxopentanoate + CO2 + H2O. It functions in the pathway carbohydrate acid metabolism; D-glucarate degradation; 2,5-dioxopentanoate from D-glucarate: step 2/2. In Chelativorans sp. (strain BNC1), this protein is Probable 5-dehydro-4-deoxyglucarate dehydratase.